Here is a 405-residue protein sequence, read N- to C-terminus: L-carnitine CoA-transferase (405 aa).

Positions 97 and 104 each coordinate CoA. Asp169 (nucleophile) is an active-site residue.

Belongs to the CoA-transferase III family. CaiB subfamily. In terms of assembly, homodimer.

It localises to the cytoplasm. The enzyme catalyses crotonobetainyl-CoA + (R)-carnitine = crotonobetaine + (R)-carnitinyl-CoA. It catalyses the reaction 4-(trimethylamino)butanoyl-CoA + (R)-carnitine = (R)-carnitinyl-CoA + 4-(trimethylamino)butanoate. It functions in the pathway amine and polyamine metabolism; carnitine metabolism. Functionally, catalyzes the reversible transfer of the CoA moiety from gamma-butyrobetainyl-CoA to L-carnitine to generate L-carnitinyl-CoA and gamma-butyrobetaine. Is also able to catalyze the reversible transfer of the CoA moiety from gamma-butyrobetainyl-CoA or L-carnitinyl-CoA to crotonobetaine to generate crotonobetainyl-CoA. This chain is L-carnitine CoA-transferase, found in Escherichia coli O17:K52:H18 (strain UMN026 / ExPEC).